A 303-amino-acid polypeptide reads, in one-letter code: Uricase (303 aa).

Ala2 is modified (N-acetylalanine). N6-acetyllysine; alternate is present on residues Lys10 and Lys23. N6-succinyllysine; alternate is present on residues Lys10 and Lys23. Lys23 acts as the Charge relay system in catalysis. Lys27 and Lys36 each carry N6-acetyllysine. Phosphoserine occurs at positions 39 and 63. The Charge relay system role is filled by Thr68. Positions 68 and 69 each coordinate urate. 3 positions are modified to N6-acetyllysine: Lys118, Lys122, and Lys164. Phe170 provides a ligand contact to urate. Lys175 and Lys185 each carry N6-acetyllysine. Residue Arg187 coordinates urate. Lys220 and Lys227 each carry N6-acetyllysine; alternate. An N6-succinyllysine; alternate mark is found at Lys220 and Lys227. Residue Ser231 is modified to Phosphoserine. Val234, Gln235, and Asn261 together coordinate urate. Catalysis depends on His263, which acts as the Charge relay system. Lys277 bears the N6-acetyllysine mark. At Tyr288 the chain carries Phosphotyrosine. The short motif at 301-303 is the Microbody targeting signal element; sequence SRL.

It belongs to the uricase family. Acetylation of Lys-118, Lys-164 and Lys-290 is observed in liver mitochondria from fasted mice but not from fed mice. May be deacetylated by Sirt5; however it is unclear whether Sirt5 mediates deacetylation or desuccinylation of Uox; additional evidence is required to validate these results.

It is found in the peroxisome. The protein localises to the mitochondrion. It catalyses the reaction urate + O2 + H2O = 5-hydroxyisourate + H2O2. Its pathway is purine metabolism; urate degradation; (S)-allantoin from urate: step 1/3. Functionally, catalyzes the oxidation of uric acid to 5-hydroxyisourate, which is further processed to form (S)-allantoin. The polypeptide is Uricase (Uox) (Mus musculus (Mouse)).